Consider the following 453-residue polypeptide: Ribosomal protein uS12 methylthiotransferase RimO (453 aa).

Residues 5–120 (PKVGFVSLGC…VMQAVHSHLP (116 aa)) enclose the MTTase N-terminal domain. The [4Fe-4S] cluster site is built by C14, C50, C79, C151, C155, and C158. The Radical SAM core domain maps to 137–382 (LTPRHYAYLK…MEVAEEVSAN (246 aa)). Positions 385 to 453 (QRKVGKTLKV…ADGHDLWGEV (69 aa)) constitute a TRAM domain.

It belongs to the methylthiotransferase family. RimO subfamily. The cofactor is [4Fe-4S] cluster.

It is found in the cytoplasm. The catalysed reaction is L-aspartate(89)-[ribosomal protein uS12]-hydrogen + (sulfur carrier)-SH + AH2 + 2 S-adenosyl-L-methionine = 3-methylsulfanyl-L-aspartate(89)-[ribosomal protein uS12]-hydrogen + (sulfur carrier)-H + 5'-deoxyadenosine + L-methionine + A + S-adenosyl-L-homocysteine + 2 H(+). Its function is as follows. Catalyzes the methylthiolation of an aspartic acid residue of ribosomal protein uS12. This is Ribosomal protein uS12 methylthiotransferase RimO from Burkholderia lata (strain ATCC 17760 / DSM 23089 / LMG 22485 / NCIMB 9086 / R18194 / 383).